The following is a 571-amino-acid chain: MSQPWPAVEIARMILAGFDDYRDHFQRITLGARQRFEQARWQDIQQAAAARINLYEEKVAEVNGWLRQAFAAEVLLDVEQWPLVKNAYIHLIDPRLDDELAETWYNSLFCSLFSHDLISDGCMFIHTTRPSMRGRERAAQTRTYRLDGSLRNLLRAVFADYPFDMPYGDLEGDLARLEEQLRECLPDWVCKDPALAVELFVPVLYRNKGAYLVGRLYNSDEQWPLVIPLLHREGHGIEADALITDEAEVSIIFSFTRSYFMADVPVPAEFVNFLKRILPGKHIAELYTSIGFYKQGKSEFYRALINHLASSDDRFVMAPGVRGMVMSVFTLPGFNTVFKIIKDRFSPSKTVDRATVIDKYRLVKSVDRVGRMADTQEFADFRFPRSKFEPDCLAELLEVAPSTVALEGDTVLIRHCWTERRMTPLNLYLEQATEGQVLEALEDYGLAIKQLAAANIFPGDMLLKNFGVTRHGRVVFYDYDEISFLTEVNFRHIPPPRYPEDEMSGEPWYSIGPHDVFPEEFPPFLFADMGQRRLFSRLHGELYDADYWKGLQAAIREGKVIDVFPYRRKAR.

Residues 318–324 (APGVRGM) and Lys339 contribute to the ATP site. Asp374 is a catalytic residue.

It belongs to the AceK family.

The protein localises to the cytoplasm. The enzyme catalyses L-seryl-[isocitrate dehydrogenase] + ATP = O-phospho-L-seryl-[isocitrate dehydrogenase] + ADP + H(+). Bifunctional enzyme which can phosphorylate or dephosphorylate isocitrate dehydrogenase (IDH) on a specific serine residue. This is a regulatory mechanism which enables bacteria to bypass the Krebs cycle via the glyoxylate shunt in response to the source of carbon. When bacteria are grown on glucose, IDH is fully active and unphosphorylated, but when grown on acetate or ethanol, the activity of IDH declines drastically concomitant with its phosphorylation. The chain is Isocitrate dehydrogenase kinase/phosphatase from Pseudomonas putida (strain ATCC 700007 / DSM 6899 / JCM 31910 / BCRC 17059 / LMG 24140 / F1).